We begin with the raw amino-acid sequence, 58 residues long: uncharacterized protein (58 aa).

This is an uncharacterized protein from Saccharomyces cerevisiae (strain ATCC 204508 / S288c) (Baker's yeast).